Here is a 250-residue protein sequence, read N- to C-terminus: tRNA (guanine-N(7)-)-methyltransferase (250 aa).

Basic and acidic residues predominate over residues 1 to 10; the sequence is MTPDDPRDAS. The segment at 1 to 30 is disordered; it reads MTPDDPRDASDASLADATADSASRGHGSFF. Residues 11–24 show a composition bias toward low complexity; that stretch reads DASLADATADSASR. S-adenosyl-L-methionine contacts are provided by E79, E104, D131, and D153. Residue D153 is part of the active site. Substrate contacts are provided by K157 and D189.

Belongs to the class I-like SAM-binding methyltransferase superfamily. TrmB family.

The enzyme catalyses guanosine(46) in tRNA + S-adenosyl-L-methionine = N(7)-methylguanosine(46) in tRNA + S-adenosyl-L-homocysteine. It participates in tRNA modification; N(7)-methylguanine-tRNA biosynthesis. In terms of biological role, catalyzes the formation of N(7)-methylguanine at position 46 (m7G46) in tRNA. The sequence is that of tRNA (guanine-N(7)-)-methyltransferase from Rhodopseudomonas palustris (strain BisA53).